We begin with the raw amino-acid sequence, 126 residues long: Fluoride-specific ion channel FluC 1 (126 aa).

A run of 4 helical transmembrane segments spans residues 1-21 (MAGS…GAWL), 38-58 (WGTF…LALY), 67-87 (LALL…TFAV), and 99-119 (FVSL…AGVG). 2 residues coordinate Na(+): Gly77 and Ser80.

Belongs to the fluoride channel Fluc/FEX (TC 1.A.43) family.

The protein resides in the cell inner membrane. The catalysed reaction is fluoride(in) = fluoride(out). With respect to regulation, na(+) is not transported, but it plays an essential structural role and its presence is essential for fluoride channel function. In terms of biological role, fluoride-specific ion channel. Important for reducing fluoride concentration in the cell, thus reducing its toxicity. This Synechococcus sp. (strain CC9902) protein is Fluoride-specific ion channel FluC 1.